A 134-amino-acid polypeptide reads, in one-letter code: MVNLNIALIAHDMKKSLMIDFAIAYKDILEKCNIYATGATGQLVEEATGIKVNKFLPGPMGGDQQIGAMIAEDKMDLVIFLRDPLTAQPHEPDILALLRVCDVHSIPLATNLATAEVLIKGLDAGLLEWRNAVK.

One can recognise an MGS-like domain in the interval 1 to 134 (MVNLNIALIA…GLLEWRNAVK (134 aa)). Substrate-binding positions include His11, Lys15, and 37-40 (TGAT). Catalysis depends on Asp63, which acts as the Proton donor/acceptor. A substrate-binding site is contributed by His90.

It belongs to the methylglyoxal synthase family.

The enzyme catalyses dihydroxyacetone phosphate = methylglyoxal + phosphate. Its function is as follows. Catalyzes the formation of methylglyoxal from dihydroxyacetone phosphate. In Thermoanaerobacterium thermosaccharolyticum (Clostridium thermosaccharolyticum), this protein is Methylglyoxal synthase.